The primary structure comprises 826 residues: Ribonucleases P/MRP protein subunit POP1 (826 aa).

2 disordered regions span residues 1 to 24 (MATT…PRKI) and 49 to 91 (NKDF…SGGD). A Nuclear localization signal motif is present at residues 58–65 (KRRRTNSY). The span at 70–79 (AKKRNIKRQK) shows a compositional bias: basic residues.

As to quaternary structure, component of nuclear RNase P and RNase MRP ribonucleoproteins. RNase P consists of a catalytic RNA moiety and different protein chains. Several subunits of RNase P are also part of the RNase MRP complex. RNase MRP consists of a catalytic RNA moiety and several protein subunits.

The protein resides in the nucleus. It is found in the nucleolus. In terms of biological role, component of ribonuclease P, a ribonucleoprotein complex that generates mature tRNA molecules by cleaving their 5'-ends. Also a component of the MRP ribonuclease complex, which cleaves pre-rRNA sequences. Required for rRNA maturation, including 5.8S rRNA processing. This chain is Ribonucleases P/MRP protein subunit POP1, found in Arabidopsis thaliana (Mouse-ear cress).